The chain runs to 494 residues: Serine carboxypeptidase-like 21 (494 aa).

The first 23 residues, 1–23 (MGRLVEAIIASILLSLCFTITKS), serve as a signal peptide directing secretion. 2 N-linked (GlcNAc...) asparagine glycosylation sites follow: N37 and N69. Cystine bridges form between C85–C383, C247–C263, and C286–C350. The active site involves S179. Residues N198 and N248 are each glycosylated (N-linked (GlcNAc...) asparagine). N-linked (GlcNAc...) asparagine glycosylation occurs at N402. D418 is an active-site residue. N460 carries N-linked (GlcNAc...) asparagine glycosylation. The active site involves H471.

The protein belongs to the peptidase S10 family. Expressed in flowers and siliques.

It localises to the secreted. Functionally, probable carboxypeptidase. The polypeptide is Serine carboxypeptidase-like 21 (SCPL21) (Arabidopsis thaliana (Mouse-ear cress)).